The sequence spans 373 residues: Flagellar P-ring protein (373 aa).

The N-terminal stretch at 1 to 26 (MKLFFRFLTLVAVLAMSLADVAPAWA) is a signal peptide.

It belongs to the FlgI family. In terms of assembly, the basal body constitutes a major portion of the flagellar organelle and consists of four rings (L,P,S, and M) mounted on a central rod.

The protein resides in the periplasm. Its subcellular location is the bacterial flagellum basal body. Assembles around the rod to form the L-ring and probably protects the motor/basal body from shearing forces during rotation. The polypeptide is Flagellar P-ring protein (Rhizobium leguminosarum bv. trifolii (strain WSM2304)).